Reading from the N-terminus, the 469-residue chain is 3-isopropylmalate dehydratase large subunit (469 aa).

3 residues coordinate [4Fe-4S] cluster: C350, C410, and C413.

This sequence belongs to the aconitase/IPM isomerase family. LeuC type 1 subfamily. In terms of assembly, heterodimer of LeuC and LeuD. It depends on [4Fe-4S] cluster as a cofactor.

The catalysed reaction is (2R,3S)-3-isopropylmalate = (2S)-2-isopropylmalate. Its pathway is amino-acid biosynthesis; L-leucine biosynthesis; L-leucine from 3-methyl-2-oxobutanoate: step 2/4. Catalyzes the isomerization between 2-isopropylmalate and 3-isopropylmalate, via the formation of 2-isopropylmaleate. The sequence is that of 3-isopropylmalate dehydratase large subunit from Brucella melitensis biotype 2 (strain ATCC 23457).